The chain runs to 323 residues: ADP-L-glycero-D-manno-heptose-6-epimerase (323 aa).

Residues Phe10–Ile11, Asp31–Asn32, Lys38, Arg53, Met75–Ser79, and Asn92 each bind NADP(+). Tyr143 acts as the Proton acceptor in catalysis. Lys147 contributes to the NADP(+) binding site. Asn170 is a substrate binding site. Residues Val171 and Lys179 each contribute to the NADP(+) site. Lys179 serves as the catalytic Proton acceptor. Residues Asp181, Lys188, Phe202–Cys205, Arg216, and Tyr281 contribute to the substrate site.

The protein belongs to the NAD(P)-dependent epimerase/dehydratase family. HldD subfamily. In terms of assembly, homopentamer. The cofactor is NADP(+).

It catalyses the reaction ADP-D-glycero-beta-D-manno-heptose = ADP-L-glycero-beta-D-manno-heptose. It participates in nucleotide-sugar biosynthesis; ADP-L-glycero-beta-D-manno-heptose biosynthesis; ADP-L-glycero-beta-D-manno-heptose from D-glycero-beta-D-manno-heptose 7-phosphate: step 4/4. Its function is as follows. Catalyzes the interconversion between ADP-D-glycero-beta-D-manno-heptose and ADP-L-glycero-beta-D-manno-heptose via an epimerization at carbon 6 of the heptose. This chain is ADP-L-glycero-D-manno-heptose-6-epimerase, found in Nitratidesulfovibrio vulgaris (strain ATCC 29579 / DSM 644 / CCUG 34227 / NCIMB 8303 / VKM B-1760 / Hildenborough) (Desulfovibrio vulgaris).